The following is a 385-amino-acid chain: Centrosomal protein of 44 kDa (385 aa).

The tract at residues 11 to 192 is binds with microtubules and centrioles; it reads RNLEQVLRSL…GANIPEDTVT (182 aa). Positions 126–154 are disordered; the sequence is LEKTPSQQRKKTSSAKSEPCSSTEKTSTE. The span at 139–154 shows a compositional bias: polar residues; sequence SAKSEPCSSTEKTSTE. Positions 230–271 form a coiled coil; the sequence is EVTALQSMLAECQEKLKKLTCIESRLESLEEKMKGKVLVNEK. The tract at residues 303-348 is disordered; it reads SEDYSSSSDMDSLNPDRKSKEERHANIPLSSGYSTVSSDSTPRTST. Over residues 305-314 the composition is skewed to low complexity; it reads DYSSSSDMDS. Residues 316 to 327 are compositionally biased toward basic and acidic residues; it reads NPDRKSKEERHA. A compositionally biased stretch (low complexity) spans 332 to 342; the sequence is SSGYSTVSSDS. S342 carries the phosphoserine modification. The residue at position 343 (T343) is a Phosphothreonine. Positions 358–381 form a coiled coil; that stretch reads SEETTMQKMERMKKMFEETAELLK.

Interacts with CROCC. Interacts with POC1B; the interaction is direct and recruits POC1B to centriolar microtubules. Binds to centriolar microtubules.

The protein resides in the cytoplasm. It localises to the cytoskeleton. Its subcellular location is the microtubule organizing center. It is found in the centrosome. The protein localises to the centriole. The protein resides in the spindle pole. It localises to the midbody. In terms of biological role, centriole-enriched microtubule-binding protein involved in centriole biogenesis. In collaboration with CEP295 and POC1B, is required for the centriole-to-centrosome conversion by ensuring the formation of bona fide centriole wall. Functions as a linker component that maintains centrosome cohesion. Associates with CROCC and regulates its stability and localization to the centrosome. The protein is Centrosomal protein of 44 kDa (CEP44) of Bos taurus (Bovine).